The primary structure comprises 30 residues: MVELKFLIAFFLAFTAGILAIKLGQALYDC.

The helical transmembrane segment at 7-29 (LIAFFLAFTAGILAIKLGQALYD) threads the bilayer.

The protein belongs to the PsaM family.

The protein localises to the plastid. It is found in the chloroplast thylakoid membrane. The chain is Photosystem I reaction center subunit XII from Pinus thunbergii (Japanese black pine).